Here is a 257-residue protein sequence, read N- to C-terminus: Phosphonates import ATP-binding protein PhnC (257 aa).

The region spanning 4 to 248 (IEFKDVSKVY…VFNHIYGRSI (245 aa)) is the ABC transporter domain.

It belongs to the ABC transporter superfamily. Phosphonates importer (TC 3.A.1.9.1) family. As to quaternary structure, the complex is composed of two ATP-binding proteins (PhnC), two transmembrane proteins (PhnE) and a solute-binding protein (PhnD).

Its subcellular location is the cell membrane. It carries out the reaction phosphonate(out) + ATP + H2O = phosphonate(in) + ADP + phosphate + H(+). Functionally, part of the ABC transporter complex PhnCDE involved in phosphonates import. Responsible for energy coupling to the transport system. This is Phosphonates import ATP-binding protein PhnC from Staphylococcus epidermidis (strain ATCC 35984 / DSM 28319 / BCRC 17069 / CCUG 31568 / BM 3577 / RP62A).